Consider the following 56-residue polypeptide: U4-myrmicitoxin-Tb1a (56 aa).

The N-terminal stretch at 1-26 is a signal peptide; the sequence is MQPSYLLLTFAIIFVMVIMYSPAVEA. Residues 27-40 constitute a propeptide that is removed on maturation; the sequence is KAGADADADAHADA. Glycine 53 is subject to Glycine amide.

In terms of processing, contains 1 disulfide bond. In terms of tissue distribution, expressed by the venom gland.

It localises to the secreted. In terms of biological role, venom protein with unknown function. Does not induce paralysis when a high dose is administered by intrathoracic injection into the blowfly Lucilia caesar. In Tetramorium bicarinatum (Tramp ant), this protein is U4-myrmicitoxin-Tb1a.